The following is a 156-amino-acid chain: MPRRREVPKREILPDPKFGNVEVAKFMNVLMLDGKKSVAERIVYGAFDQIEKKAGKAPIEVFTLAIGNIKPVVEVKSRRVGGANYQVPVEVRPSRRLALAMRWLREAAKKRSEKSMALRLAGELLEASEGRGGAMKKRDEVHRMAEANKAFSHFRF.

Belongs to the universal ribosomal protein uS7 family. In terms of assembly, part of the 30S ribosomal subunit. Contacts proteins S9 and S11.

Functionally, one of the primary rRNA binding proteins, it binds directly to 16S rRNA where it nucleates assembly of the head domain of the 30S subunit. Is located at the subunit interface close to the decoding center, probably blocks exit of the E-site tRNA. This chain is Small ribosomal subunit protein uS7, found in Ralstonia nicotianae (strain ATCC BAA-1114 / GMI1000) (Ralstonia solanacearum).